The sequence spans 161 residues: S-protein homolog 2 (161 aa).

The N-terminal stretch at 1-24 (MDIPKQYLSLFILIIFITTKLSQA) is a signal peptide. Residues Asn-75, Asn-106, and Asn-157 are each glycosylated (N-linked (GlcNAc...) asparagine).

The protein belongs to the plant self-incompatibility (S1) protein family.

It is found in the secreted. This is S-protein homolog 2 from Arabidopsis thaliana (Mouse-ear cress).